The following is a 303-amino-acid chain: N-acetyl-D-glucosamine kinase (303 aa).

ATP-binding positions include 4-11 (GFDIGGTK) and 133-140 (GVGGGLVF). Residues H157, C177, C179, and C184 each contribute to the Zn(2+) site.

Belongs to the ROK (NagC/XylR) family. NagK subfamily.

The enzyme catalyses N-acetyl-D-glucosamine + ATP = N-acetyl-D-glucosamine 6-phosphate + ADP + H(+). It functions in the pathway cell wall biogenesis; peptidoglycan recycling. Its function is as follows. Catalyzes the phosphorylation of N-acetyl-D-glucosamine (GlcNAc) derived from cell-wall degradation, yielding GlcNAc-6-P. This chain is N-acetyl-D-glucosamine kinase, found in Shigella flexneri serotype 5b (strain 8401).